Reading from the N-terminus, the 405-residue chain is MSQKEKVILAYSGGLDTSIIIPWLKENYDYEVIAMAADVGQGEELEPLREKAIKTGASKIYIEDLKEEFVTDFIFPTLKAGAVYEGKYLLGTSFARPLIAKRMVEIALKEGATAVAHGATGKGNDQVRFELTVKALAPHLKIIAPWRIWDIKSREDEIEYAQARNIPIPVSKEDNYSMDRNLWHLSHEGLDLEDPWNEPQYDKILKLMVPPEKAPDKPTYVEIYFEKGIPKKVNGVEYGPVELIEVLNKIGGENGIGIVDIVENRLVGMKSRGVYETPGGTILYAAHRELELLCLDRDTLHYKDLVAQRFAELVYYGQWYTPLREAISAFVDVTQETVTGTVRLKLYKGNIISAGAKSDYSLYSEELSTFGEDNVYNQKDAEGFINLFGLPMKVQALMKEKNKGK.

ATP-binding positions include 10-18 (AYSGGLDTS) and alanine 37. Positions 88 and 93 each coordinate L-citrulline. Glycine 118 is an ATP binding site. Threonine 120, asparagine 124, and aspartate 125 together coordinate L-aspartate. Asparagine 124 serves as a coordination point for L-citrulline. Arginine 128, serine 177, serine 186, glutamate 263, and tyrosine 275 together coordinate L-citrulline.

The protein belongs to the argininosuccinate synthase family. Type 1 subfamily. Homotetramer.

The protein localises to the cytoplasm. It catalyses the reaction L-citrulline + L-aspartate + ATP = 2-(N(omega)-L-arginino)succinate + AMP + diphosphate + H(+). It functions in the pathway amino-acid biosynthesis; L-arginine biosynthesis; L-arginine from L-ornithine and carbamoyl phosphate: step 2/3. The polypeptide is Argininosuccinate synthase (Acetivibrio thermocellus (strain ATCC 27405 / DSM 1237 / JCM 9322 / NBRC 103400 / NCIMB 10682 / NRRL B-4536 / VPI 7372) (Clostridium thermocellum)).